We begin with the raw amino-acid sequence, 194 residues long: Putative manganese efflux pump MntP (194 aa).

The next 6 membrane-spanning stretches (helical) occupy residues 3–23 (PITT…AAIG), 37–57 (LYVA…GWLL), 65–85 (IATF…IHMI), 112–132 (LAAT…SMAF), 137–157 (IGIV…FGVM), and 170–190 (AEIV…YEHL).

The protein belongs to the MntP (TC 9.B.29) family.

Its subcellular location is the cell inner membrane. Probably functions as a manganese efflux pump. The protein is Putative manganese efflux pump MntP of Xylella fastidiosa (strain M23).